A 317-amino-acid chain; its full sequence is 2-oxoglutarate and iron-dependent oxygenase domain-containing protein 3 (317 aa).

A disordered region spans residues 1-34; sequence MATRHRRRGGSAPSWAKPGKPGERPGGPKKSRGR. Over 1–39 the chain is Cytoplasmic; the sequence is MATRHRRRGGSAPSWAKPGKPGERPGGPKKSRGRTSWKS. A helical; Signal-anchor for type II membrane protein transmembrane segment spans residues 40–60; the sequence is LLIWGVFGVTLGLMAGYYLWG. Residues 61 to 317 lie on the Lumenal side of the membrane; that stretch reads ELITDDSVTE…EHAIGDPTWT (257 aa). Asn195 and Asn213 each carry an N-linked (GlcNAc...) asparagine glycan. Positions 205–307 constitute a Fe2OG dioxygenase domain; it reads KPTFFSRMNS…AITISFTCNP (103 aa). His228 and Asp230 together coordinate Fe cation. Asn265 carries N-linked (GlcNAc...) asparagine glycosylation. His286 provides a ligand contact to Fe cation. Arg296 is an active-site residue. Arg296 provides a ligand contact to 2-oxoglutarate.

It belongs to the OGFOD3 family. Requires Fe(2+) as cofactor. L-ascorbate serves as cofactor.

The protein resides in the membrane. In Xenopus tropicalis (Western clawed frog), this protein is 2-oxoglutarate and iron-dependent oxygenase domain-containing protein 3 (ogfod3).